The primary structure comprises 252 residues: Probable transcriptional regulatory protein Cagg_2594 (252 aa).

Over residues 1–14 (MSGHSKWHTIRRAK) the composition is skewed to basic residues. Positions 1 to 22 (MSGHSKWHTIRRAKSANDQRRG) are disordered.

It belongs to the TACO1 family.

Its subcellular location is the cytoplasm. The sequence is that of Probable transcriptional regulatory protein Cagg_2594 from Chloroflexus aggregans (strain MD-66 / DSM 9485).